Here is a 141-residue protein sequence, read N- to C-terminus: ATP synthase epsilon chain (141 aa).

The protein belongs to the ATPase epsilon chain family. F-type ATPases have 2 components, CF(1) - the catalytic core - and CF(0) - the membrane proton channel. CF(1) has five subunits: alpha(3), beta(3), gamma(1), delta(1), epsilon(1). CF(0) has three main subunits: a, b and c.

It is found in the cell inner membrane. In terms of biological role, produces ATP from ADP in the presence of a proton gradient across the membrane. This Acidithiobacillus ferridurans protein is ATP synthase epsilon chain (atpC).